Here is a 483-residue protein sequence, read N- to C-terminus: Altronate oxidoreductase (483 aa).

Isoleucine 18 to alanine 29 is a binding site for NAD(+).

Belongs to the mannitol dehydrogenase family. UxaB subfamily.

It catalyses the reaction D-altronate + NAD(+) = keto-D-tagaturonate + NADH + H(+). It participates in carbohydrate metabolism; pentose and glucuronate interconversion. The sequence is that of Altronate oxidoreductase from Cronobacter sakazakii (strain ATCC BAA-894) (Enterobacter sakazakii).